The sequence spans 552 residues: Dihydroxy-acid dehydratase (552 aa).

Cysteine 46 serves as a coordination point for [2Fe-2S] cluster. Aspartate 78 is a Mg(2+) binding site. Cysteine 119 is a binding site for [2Fe-2S] cluster. Residues aspartate 120 and lysine 121 each coordinate Mg(2+). An N6-carboxylysine modification is found at lysine 121. [2Fe-2S] cluster is bound at residue cysteine 191. Residue glutamate 442 coordinates Mg(2+). The active-site Proton acceptor is serine 468.

The protein belongs to the IlvD/Edd family. As to quaternary structure, homodimer. Requires [2Fe-2S] cluster as cofactor. The cofactor is Mg(2+).

It carries out the reaction (2R)-2,3-dihydroxy-3-methylbutanoate = 3-methyl-2-oxobutanoate + H2O. It catalyses the reaction (2R,3R)-2,3-dihydroxy-3-methylpentanoate = (S)-3-methyl-2-oxopentanoate + H2O. It participates in amino-acid biosynthesis; L-isoleucine biosynthesis; L-isoleucine from 2-oxobutanoate: step 3/4. The protein operates within amino-acid biosynthesis; L-valine biosynthesis; L-valine from pyruvate: step 3/4. In terms of biological role, functions in the biosynthesis of branched-chain amino acids. Catalyzes the dehydration of (2R,3R)-2,3-dihydroxy-3-methylpentanoate (2,3-dihydroxy-3-methylvalerate) into 2-oxo-3-methylpentanoate (2-oxo-3-methylvalerate) and of (2R)-2,3-dihydroxy-3-methylbutanoate (2,3-dihydroxyisovalerate) into 2-oxo-3-methylbutanoate (2-oxoisovalerate), the penultimate precursor to L-isoleucine and L-valine, respectively. This chain is Dihydroxy-acid dehydratase, found in Picrophilus torridus (strain ATCC 700027 / DSM 9790 / JCM 10055 / NBRC 100828 / KAW 2/3).